Here is a 280-residue protein sequence, read N- to C-terminus: Exfoliative toxin A (280 aa).

A signal peptide spans 1–38; sequence MNNSKIISKVLLSLSLFTVGASAFVIQDELMQKNHAKA. Catalysis depends on charge relay system residues histidine 110, aspartate 158, and serine 233.

Belongs to the peptidase S1B family. Ca(2+) is required as a cofactor.

Functionally, has serine protease-like properties and binds to the skin protein profilaggrin. Cleaves substrates after acidic residues. Exfoliative toxins cause impetigous diseases commonly referred as staphylococcal scalded skin syndrome (SSSS). This Staphylococcus aureus protein is Exfoliative toxin A (eta).